The sequence spans 183 residues: Inosine/xanthosine triphosphatase (183 aa).

The protein belongs to the YjjX NTPase family. Homodimer. The cofactor is Mg(2+). Requires Mn(2+) as cofactor.

The catalysed reaction is XTP + H2O = XDP + phosphate + H(+). The enzyme catalyses ITP + H2O = IDP + phosphate + H(+). Functionally, phosphatase that hydrolyzes non-canonical purine nucleotides such as XTP and ITP to their respective diphosphate derivatives. Probably excludes non-canonical purines from DNA/RNA precursor pool, thus preventing their incorporation into DNA/RNA and avoiding chromosomal lesions. This Vibrio cholerae serotype O1 (strain ATCC 39315 / El Tor Inaba N16961) protein is Inosine/xanthosine triphosphatase.